We begin with the raw amino-acid sequence, 350 residues long: Putative ATP-binding protein BruAb2_0487 (350 aa).

In terms of domain architecture, ABC transporter spans 4–234 (VSLRGISKTF…PANKFVAGFI (231 aa)). 36-43 (GPSGCGKS) is an ATP binding site.

It belongs to the ABC transporter superfamily. The complex is composed of two ATP-binding proteins (BruAb2_0487), two transmembrane proteins (BruAb2_0483) and a solute-binding protein (BruAb2_0484).

The protein localises to the cell inner membrane. Probably part of an ABC transporter complex. Probably responsible for energy coupling to the transport system. This chain is Putative ATP-binding protein BruAb2_0487, found in Brucella abortus biovar 1 (strain 9-941).